The sequence spans 215 residues: Probable phosphoglycerate mutase GpmB (215 aa).

Substrate contacts are provided by residues 8-15 (RHGETQWN), 21-22 (QG), Arg58, Lys60, 82-85 (ELDM), 104-105 (RR), and 151-152 (GI). Residue His9 is the Tele-phosphohistidine intermediate of the active site. The active-site Proton donor/acceptor is Glu82.

This sequence belongs to the phosphoglycerate mutase family. GpmB subfamily.

The catalysed reaction is (2R)-2-phosphoglycerate = (2R)-3-phosphoglycerate. It functions in the pathway carbohydrate degradation; glycolysis; pyruvate from D-glyceraldehyde 3-phosphate: step 3/5. The chain is Probable phosphoglycerate mutase GpmB from Salmonella arizonae (strain ATCC BAA-731 / CDC346-86 / RSK2980).